A 414-amino-acid polypeptide reads, in one-letter code: Serine--tRNA ligase (414 aa).

230-232 (TSE) contacts L-serine. 261–263 (RQE) is an ATP binding site. Glu-284 is an L-serine binding site. 348–351 (EISS) serves as a coordination point for ATP. An L-serine-binding site is contributed by Ser-382.

Belongs to the class-II aminoacyl-tRNA synthetase family. Type-1 seryl-tRNA synthetase subfamily. In terms of assembly, homodimer. The tRNA molecule binds across the dimer.

The protein resides in the cytoplasm. The catalysed reaction is tRNA(Ser) + L-serine + ATP = L-seryl-tRNA(Ser) + AMP + diphosphate + H(+). It carries out the reaction tRNA(Sec) + L-serine + ATP = L-seryl-tRNA(Sec) + AMP + diphosphate + H(+). It functions in the pathway aminoacyl-tRNA biosynthesis; selenocysteinyl-tRNA(Sec) biosynthesis; L-seryl-tRNA(Sec) from L-serine and tRNA(Sec): step 1/1. Its function is as follows. Catalyzes the attachment of serine to tRNA(Ser). Is also able to aminoacylate tRNA(Sec) with serine, to form the misacylated tRNA L-seryl-tRNA(Sec), which will be further converted into selenocysteinyl-tRNA(Sec). This is Serine--tRNA ligase from Campylobacter concisus (strain 13826).